The primary structure comprises 573 residues: Thiol:disulfide interchange protein DsbD (573 aa).

Residues 1 to 20 (MLKRFFLLLSSLLLVCNVQA) form the signal peptide. The Periplasmic segment spans residues 21-175 (GLFNNKPQYL…AENLSNNYLS (155 aa)). Intrachain disulfides connect Cys121–Cys126 and Cys191–Cys313. Residues 176–196 (IFGFLLLGIGLAFTPCVLPML) form a helical membrane-spanning segment. Residues 197–227 (PLLSAIVIGHKNRPNTSRALLLSFTYVQGMA) lie on the Cytoplasmic side of the membrane. A helical transmembrane segment spans residues 228-248 (LTYTLLGLTVAAIGLPFQVAL). Over 249-251 (QSP) the chain is Periplasmic. Residues 252-272 (AVLISLAVLFTLLAASMFGLF) traverse the membrane as a helical segment. The Cytoplasmic segment spans residues 273 to 292 (EIRLPNTWQQKLNALSQQQQ). A helical transmembrane segment spans residues 293-313 (GGAVGNVFIMGIIAGLVASPC). Over 314 to 331 (TSAPLSGALLYVAQSGNL) the chain is Periplasmic. A helical membrane pass occupies residues 332–352 (LIGGLALYLLALGMGLPLILI). At 353-365 (TVFGNQILPKSGE) the chain is on the cytoplasmic side. Residues 366–386 (WLFKVKTAFGFVMLALPIFLI) form a helical membrane-spanning segment. Residues 387–393 (SRILPSH) are Periplasmic-facing. A helical transmembrane segment spans residues 394 to 414 (YEPFLWSTLALAFLGWLISSL). Topologically, residues 415 to 425 (NYSTMLKQAVR) are cytoplasmic. Residues 426 to 446 (ILLFIAFGLTAYPWANLVWQT) form a helical membrane-spanning segment. Residues 440–573 (ANLVWQTTSN…NQFLAWLNRL (134 aa)) form the Thioredoxin domain. At 447–573 (TSNTAQPTTP…NQFLAWLNRL (127 aa)) the chain is on the periplasmic side. Cys490 and Cys493 form a disulfide bridge.

It belongs to the thioredoxin family. DsbD subfamily.

The protein resides in the cell inner membrane. It catalyses the reaction [protein]-dithiol + NAD(+) = [protein]-disulfide + NADH + H(+). The catalysed reaction is [protein]-dithiol + NADP(+) = [protein]-disulfide + NADPH + H(+). Required to facilitate the formation of correct disulfide bonds in some periplasmic proteins and for the assembly of the periplasmic c-type cytochromes. Acts by transferring electrons from cytoplasmic thioredoxin to the periplasm. This transfer involves a cascade of disulfide bond formation and reduction steps. This chain is Thiol:disulfide interchange protein DsbD, found in Haemophilus ducreyi (strain 35000HP / ATCC 700724).